Consider the following 280-residue polypeptide: Acetylglutamate kinase (280 aa).

Substrate-binding positions include 57 to 58, R79, and N174; that span reads GG.

This sequence belongs to the acetylglutamate kinase family. ArgB subfamily.

Its subcellular location is the cytoplasm. The catalysed reaction is N-acetyl-L-glutamate + ATP = N-acetyl-L-glutamyl 5-phosphate + ADP. Its pathway is amino-acid biosynthesis; L-arginine biosynthesis; N(2)-acetyl-L-ornithine from L-glutamate: step 2/4. In terms of biological role, catalyzes the ATP-dependent phosphorylation of N-acetyl-L-glutamate. In Helicobacter hepaticus (strain ATCC 51449 / 3B1), this protein is Acetylglutamate kinase.